The primary structure comprises 139 residues: Ribulose bisphosphate carboxylase small subunit (139 aa).

This sequence belongs to the RuBisCO small chain family. Heterohexadecamer of 8 large and 8 small subunits.

The protein localises to the plastid. It localises to the chloroplast. Its function is as follows. RuBisCO catalyzes two reactions: the carboxylation of D-ribulose 1,5-bisphosphate, the primary event in carbon dioxide fixation, as well as the oxidative fragmentation of the pentose substrate in the photorespiration process. Both reactions occur simultaneously and in competition at the same active site. Although the small subunit is not catalytic it is essential for maximal activity. This chain is Ribulose bisphosphate carboxylase small subunit, found in Cylindrotheca sp. (strain N1) (Marine diatom).